Reading from the N-terminus, the 532-residue chain is Cytokinin dehydrogenase 8 (532 aa).

Residues 1 to 26 (MELKAMYLYAAVLAVLLCSSVNFIQS) form the signal peptide. Residues 51–238 (VSDAPFAVMR…TRARIPLQLA (188 aa)) form the FAD-binding PCMH-type domain. Ala-87, Gly-89, and Gly-91 together coordinate FAD. His-92 bears the Pros-8alpha-FAD histidine mark. Residues Ser-93, Gln-97, Asp-162, Thr-167, Ser-173, Ile-177, and Ile-228 each contribute to the FAD site. The N-linked (GlcNAc...) asparagine glycan is linked to Asn-420. The FAD site is built by Tyr-482 and Gln-520.

The protein belongs to the oxygen-dependent FAD-linked oxidoreductase family. Monomer. It depends on FAD as a cofactor.

The protein resides in the secreted. Its subcellular location is the extracellular space. The catalysed reaction is N(6)-dimethylallyladenine + A + H2O = 3-methyl-2-butenal + adenine + AH2. Its function is as follows. Catalyzes the oxidation of cytokinins, a family of N(6)-substituted adenine derivatives that are plant hormones, where the substituent is an isopentenyl group. The protein is Cytokinin dehydrogenase 8 (CKX8) of Oryza sativa subsp. indica (Rice).